The primary structure comprises 204 residues: Protein GrpE (204 aa).

Positions 1-42 (MTDETAKNGPDAAADAQIEPQVQEETNSTAEDAGQDNNPTAA) are disordered. Over residues 23–41 (QEETNSTAEDAGQDNNPTA) the composition is skewed to polar residues.

This sequence belongs to the GrpE family. As to quaternary structure, homodimer.

It localises to the cytoplasm. In terms of biological role, participates actively in the response to hyperosmotic and heat shock by preventing the aggregation of stress-denatured proteins, in association with DnaK and GrpE. It is the nucleotide exchange factor for DnaK and may function as a thermosensor. Unfolded proteins bind initially to DnaJ; upon interaction with the DnaJ-bound protein, DnaK hydrolyzes its bound ATP, resulting in the formation of a stable complex. GrpE releases ADP from DnaK; ATP binding to DnaK triggers the release of the substrate protein, thus completing the reaction cycle. Several rounds of ATP-dependent interactions between DnaJ, DnaK and GrpE are required for fully efficient folding. The sequence is that of Protein GrpE from Allorhizobium ampelinum (strain ATCC BAA-846 / DSM 112012 / S4) (Agrobacterium vitis (strain S4)).